The primary structure comprises 663 residues: Methionine--tRNA ligase (663 aa).

Residues 13–23 (PYTNGPCHLGH) carry the 'HIGH' region motif. Residues cysteine 144, cysteine 147, cysteine 156, and cysteine 160 each coordinate Zn(2+). The 'KMSKS' region motif lies at 326–330 (KFSKS). An ATP-binding site is contributed by lysine 329. Residues 565 to 663 (EFGKMKLIVG…QAVEPGTPIR (99 aa)) form the tRNA-binding domain.

It belongs to the class-I aminoacyl-tRNA synthetase family. MetG type 1 subfamily. In terms of assembly, homodimer. The cofactor is Zn(2+).

The protein localises to the cytoplasm. The catalysed reaction is tRNA(Met) + L-methionine + ATP = L-methionyl-tRNA(Met) + AMP + diphosphate. Functionally, is required not only for elongation of protein synthesis but also for the initiation of all mRNA translation through initiator tRNA(fMet) aminoacylation. This is Methionine--tRNA ligase from Methanosphaerula palustris (strain ATCC BAA-1556 / DSM 19958 / E1-9c).